Consider the following 298-residue polypeptide: Probable endonuclease 4 (298 aa).

H69, H111, E146, D180, H183, H215, D228, H230, and E260 together coordinate Zn(2+).

It belongs to the AP endonuclease 2 family. Zn(2+) serves as cofactor.

It catalyses the reaction Endonucleolytic cleavage to 5'-phosphooligonucleotide end-products.. Its function is as follows. Endonuclease IV plays a role in DNA repair. It cleaves phosphodiester bonds at apurinic or apyrimidinic (AP) sites, generating a 3'-hydroxyl group and a 5'-terminal sugar phosphate. The polypeptide is Probable endonuclease 4 (Bacillus cereus (strain B4264)).